The chain runs to 275 residues: Large ribosomal subunit protein uL2 (275 aa).

A disordered region spans residues 221–275 (RGTAMNPIDHPHGGGEGKNFGKHPVSPWGVQSKGKKTRKNKRTEKYILYNRKYKK). A compositionally biased stretch (basic residues) spans 253 to 262 (KGKKTRKNKR).

It belongs to the universal ribosomal protein uL2 family. In terms of assembly, part of the 50S ribosomal subunit. Forms a bridge to the 30S subunit in the 70S ribosome.

In terms of biological role, one of the primary rRNA binding proteins. Required for association of the 30S and 50S subunits to form the 70S ribosome, for tRNA binding and peptide bond formation. It has been suggested to have peptidyltransferase activity; this is somewhat controversial. Makes several contacts with the 16S rRNA in the 70S ribosome. In Wigglesworthia glossinidia brevipalpis, this protein is Large ribosomal subunit protein uL2.